A 185-amino-acid chain; its full sequence is NEDD8-conjugating enzyme UBE2F (185 aa).

The tract at residues 1–29 is interaction with UBA3; it reads MLTLASKLKRDDGVRGPRASNPASDSTRR. Positions 11–30 are disordered; it reads DDGVRGPRASNPASDSTRRV. Positions 32 to 185 constitute a UBC core domain; that stretch reads VRDKLLVKEV…VEDYIKRYAR (154 aa). The active-site Glycyl thioester intermediate is the cysteine 116.

It belongs to the ubiquitin-conjugating enzyme family. UBE2F subfamily.

The enzyme catalyses [E1 NEDD8-activating enzyme]-S-[NEDD8 protein]-yl-L-cysteine + [E2 NEDD8-conjugating enzyme]-L-cysteine = [E1 NEDD8-activating enzyme]-L-cysteine + [E2 NEDD8-conjugating enzyme]-S-[NEDD8-protein]-yl-L-cysteine.. Its pathway is protein modification; protein neddylation. Functionally, accepts the ubiquitin-like protein NEDD8 from the UBA3-NAE1 E1 complex and catalyzes its covalent attachment to other proteins. Together with the E3 ubiquitin ligase RNF7/RBX2, specifically neddylates cullin-5 (CUL5). Does not neddylate CUL1, CUL2, CUL3, CUL4A or CUL4B. The protein is NEDD8-conjugating enzyme UBE2F (UBE2F) of Gallus gallus (Chicken).